A 1297-amino-acid polypeptide reads, in one-letter code: Cingulin-like protein 1 (1297 aa).

The interval M1–T550 is head. Positions A37–G51 match the ZIM motif. A phosphoserine mark is found at S113, S203, and S257. Disordered stretches follow at residues N161–D208, G245–S306, K364–F396, and Q428–V467. Residues Y197–S206 show a composition bias toward polar residues. Positions E268–D283 are enriched in basic and acidic residues. S284, S298, and S299 each carry phosphoserine. A compositionally biased stretch (low complexity) spans S297–S306. A compositionally biased stretch (basic residues) spans L367 to R378. The span at I379–S389 shows a compositional bias: basic and acidic residues. Residues S389 and S392 each carry the phosphoserine modification. S482 is subject to Phosphoserine. The disordered stretch occupies residues S586–L608. A compositionally biased stretch (polar residues) spans A592–L608. The stretch at E604–K1251 forms a coiled coil. Phosphoserine is present on residues S678 and S704. The interval S1259 to I1297 is tail.

Belongs to the cingulin family. In terms of assembly, homodimer or oligomer. Interacts with CD2AP and SH3BP1; probably part of a complex at cell junctions. Widely expressed. Highly expressed in the kidney and lung.

Its subcellular location is the cell junction. The protein resides in the tight junction. May be involved in anchoring the apical junctional complex, especially tight junctions, to actin-based cytoskeletons. This is Cingulin-like protein 1 from Mus musculus (Mouse).